A 462-amino-acid polypeptide reads, in one-letter code: Gastric inhibitory polypeptide receptor (462 aa).

Positions 1–18 are cleaved as a signal peptide; that stretch reads MPLRPRLLLLCLWGLLLQ. The Extracellular segment spans residues 19–135; the sequence is QAETDSEGQT…DQRLILERLQ (117 aa). 3 disulfide bridges follow: cysteine 43–cysteine 67, cysteine 58–cysteine 100, and cysteine 81–cysteine 115. N-linked (GlcNAc...) asparagine glycans are attached at residues asparagine 59 and asparagine 74. The helical transmembrane segment at 136–158 threads the bilayer; the sequence is VVYTVGYSLSLGTLLLALLILSL. Topologically, residues 159–166 are cytoplasmic; it reads FRRLHCTR. A helical transmembrane segment spans residues 167-186; sequence NYIHMNVFLSFMLRAVAILT. Residues 187 to 214 are Extracellular-facing; that stretch reads RDRLLPTLGPYPGDRTLTLRNQALAACR. Residues 215 to 239 form a helical membrane-spanning segment; sequence TAQIVTQYCVGANYTWLLVEGVYLH. Over 240 to 251 the chain is Cytoplasmic; sequence HLLVIVGGSEKG. A helical transmembrane segment spans residues 252–275; sequence HFRCYLLLGWGAPALFVIPWVIVR. Residues 276-290 lie on the Extracellular side of the membrane; it reads YLLENTQCWERNEVK. Residues 291-316 traverse the membrane as a helical segment; that stretch reads AIWWIIRTPILITILINFFIFIRILG. The Cytoplasmic segment spans residues 317-338; sequence ILVSKLRTRQMRCPDYRLRLAR. The chain crosses the membrane as a helical span at residues 339–359; that stretch reads STLTLVPLLGVHEVVFAPVTE. At 360-374 the chain is on the extracellular side; that stretch reads EQAEGTLRFAKLAFE. The helical transmembrane segment at 375–395 threads the bilayer; the sequence is IFLSSFQGFLVSVLYCFINKE. Topologically, residues 396–462 are cytoplasmic; the sequence is VQSEIRRSWR…PGEEVLESYC (67 aa). The tract at residues 421–462 is disordered; the sequence is HAELGPQALPSRSAPREVPITGSTLPSGPLHGPGEEVLESYC.

The protein belongs to the G-protein coupled receptor 2 family. May form homodimers and heterodimers with GLP1R. N-glycosylation is required for cell surface expression and lengthens receptor half-life by preventing degradation in the ER. Widely distributed including pancreatic islets, brain and various peripheral tissues.

It is found in the cell membrane. This is a receptor for GIP. The activity of this receptor is mediated by G proteins which activate adenylyl cyclase. The polypeptide is Gastric inhibitory polypeptide receptor (GIPR) (Mesocricetus auratus (Golden hamster)).